The primary structure comprises 498 residues: Protein MGF 505-5R (498 aa).

The protein belongs to the asfivirus MGF 505 family.

In terms of biological role, plays a role in virus cell tropism, and may be required for efficient virus replication in macrophages. In Ornithodoros (relapsing fever ticks), this protein is Protein MGF 505-5R.